We begin with the raw amino-acid sequence, 737 residues long: Relaxin receptor 2 (737 aa).

The Extracellular segment spans residues 1-399 (MFPLLHFIVL…SSFEDLLANN (399 aa)). The LDL-receptor class A domain maps to 27–64 (LCQKGYFPCGNLTKCLPRAFHCDGVDDCGNGADEDNCG). 3 disulfides stabilise this stretch: C28-C41, C35-C54, and C48-C63. An N-linked (GlcNAc...) asparagine glycan is attached at N37. N-linked (GlcNAc...) asparagine glycosylation occurs at N121. 10 LRR repeats span residues 121–142 (NTTL…VFTK), 145–166 (QLKQ…AFFG), 169–190 (NLQI…VFKD), 193–214 (QLTW…LFTG), 217–238 (SLFF…MCAQ), 241–262 (QLNW…SFLS), 265–286 (SLTV…TFSS), 289–310 (NLGE…IFKD), 313–334 (LLQK…QFES), and 337–358 (QLQS…MFQP). An N-linked (GlcNAc...) asparagine glycan is attached at N257. N318 carries an N-linked (GlcNAc...) asparagine glycan. N361 is a glycosylation site (N-linked (GlcNAc...) asparagine). A helical transmembrane segment spans residues 400 to 420 (ILRIFVWVIAFITCFGNLFVI). Over 421–438 (GMRSFIKAENTTHATSIK) the chain is Cytoplasmic. A helical membrane pass occupies residues 439 to 459 (ILCCADCLMGVYLFFIGFFDI). The Extracellular portion of the chain corresponds to 460–478 (KYRGQYQKYALLWMESLQC). Residues C478 and C556 are joined by a disulfide bond. The chain crosses the membrane as a helical span at residues 479–501 (RLMGFLAMLSTEVSVLLLTYLTL). Topologically, residues 502–520 (EKFLAIVFPFSNIRPGKWQ) are cytoplasmic. The helical transmembrane segment at 521–541 (TMVILICIWIVGFLIAVIPFW) threads the bilayer. Residues 542 to 575 (KEDYFGNFYGKNGVCFPLYYDQTEDIGSKGYSLG) lie on the Extracellular side of the membrane. Residues 576 to 596 (IFLGVNLLAFLIIVFSYTIMF) form a helical membrane-spanning segment. The Cytoplasmic portion of the chain corresponds to 597–622 (CSIKKTALQTSEVRNPIGREVAVANR). A helical membrane pass occupies residues 623 to 643 (FFFIVFSDAICWIPVFVIKIL). Residues 644-653 (SLFRVEIPGT) are Extracellular-facing. A helical membrane pass occupies residues 654–674 (ITSWIVIFFLPVNSALNPILY). Residues 675–737 (TLTTSFFKDK…LGDSIVKPIS (63 aa)) are Cytoplasmic-facing.

The protein belongs to the G-protein coupled receptor 1 family.

It localises to the cell membrane. In terms of biological role, receptor for relaxin. The activity of this receptor is mediated by G proteins leading to stimulation of adenylate cyclase and an increase of cAMP. May also be a receptor for Leydig insulin-like peptide (INSL3). The chain is Relaxin receptor 2 (RXFP2) from Canis lupus familiaris (Dog).